A 762-amino-acid polypeptide reads, in one-letter code: Serine/threonine-protein kinase PLK4 (762 aa).

One can recognise a Protein kinase domain in the interval 14–268 (YEVQHLLGKG…LEQVLRHPFM (255 aa)). Residues 20–28 (LGKGGFACV) and Lys-43 contribute to the ATP site. Asp-139 acts as the Proton acceptor in catalysis. The Cryptic POLO box 1 (CPB1) domain maps to 383–498 (AECISMPPLN…ARFVSLVKSK (116 aa)). A Cryptic POLO box 2 (CPB2) domain is found at 499-602 (TPKVTYFSGL…GRRPTPEVMP (104 aa)). The region spanning 657–736 (PIKRLNVPGV…LPQVQMKLKS (80 aa)) is the POLO box domain.

This sequence belongs to the protein kinase superfamily. Ser/Thr protein kinase family. CDC5/Polo subfamily. Homodimer. In terms of processing, ubiquitinated by the SCF(Slimb) ubiquitin ligase complex; leading to its degradation by the proteasome during interphase and regulating centriole number and ensuring the block to centriole reduplication.

The protein resides in the cytoplasm. It localises to the cytoskeleton. The protein localises to the microtubule organizing center. It is found in the centrosome. Its subcellular location is the centriole. It catalyses the reaction L-seryl-[protein] + ATP = O-phospho-L-seryl-[protein] + ADP + H(+). The enzyme catalyses L-threonyl-[protein] + ATP = O-phospho-L-threonyl-[protein] + ADP + H(+). Its function is as follows. Serine/threonine-protein kinase that plays a central role in centriole duplication. Able to trigger procentriole formation on the surface of the mother centriole cylinder, using mother centriole as a platform, leading to the recruitment of centriole biogenesis proteins such as sas-6. When overexpressed, it is able to induce centrosome amplification through the simultaneous generation of multiple procentrioles adjoining each parental centriole during S phase. Centrosome amplification following overexpression can initiate tumorigenesis, highlighting the importance of centrosome regulation in cancers. This is Serine/threonine-protein kinase PLK4 (SAK) from Drosophila grimshawi (Hawaiian fruit fly).